The following is a 489-amino-acid chain: Rhamnulokinase (489 aa).

Residue 13–17 (ASSGR) participates in ATP binding. C68 and C222 are joined by a disulfide. Substrate contacts are provided by residues G83 and 236 to 238 (HDT). D237 (proton acceptor) is an active-site residue. T259 contributes to the ATP binding site. N296 contacts substrate. Q304 serves as a coordination point for ATP. A disulfide bond links C353 and C370. G402 contacts ATP. Cysteines 413 and 417 form a disulfide.

The protein belongs to the rhamnulokinase family. Monomer. It depends on Mg(2+) as a cofactor.

It catalyses the reaction L-rhamnulose + ATP = L-rhamnulose 1-phosphate + ADP + H(+). The protein operates within carbohydrate degradation; L-rhamnose degradation; glycerone phosphate from L-rhamnose: step 2/3. In terms of biological role, involved in the catabolism of L-rhamnose (6-deoxy-L-mannose). Catalyzes the transfer of the gamma-phosphate group from ATP to the 1-hydroxyl group of L-rhamnulose to yield L-rhamnulose 1-phosphate. The sequence is that of Rhamnulokinase from Escherichia coli O157:H7.